A 184-amino-acid chain; its full sequence is GTP cyclohydrolase 1 (184 aa).

Residues Cys-75, His-78, and Cys-146 each contribute to the Zn(2+) site.

It belongs to the GTP cyclohydrolase I family. As to quaternary structure, homomer.

The catalysed reaction is GTP + H2O = 7,8-dihydroneopterin 3'-triphosphate + formate + H(+). It participates in cofactor biosynthesis; 7,8-dihydroneopterin triphosphate biosynthesis; 7,8-dihydroneopterin triphosphate from GTP: step 1/1. The polypeptide is GTP cyclohydrolase 1 (Streptococcus pneumoniae serotype 19F (strain G54)).